We begin with the raw amino-acid sequence, 390 residues long: Peroxisomal sarcosine oxidase (390 aa).

Residue 9–39 (DAIVIGAGIQGCFTAYHLAKHRKRILLLEQF) participates in FAD binding. Lysine 126 carries the N6-acetyllysine modification. At cysteine 319 the chain carries S-8alpha-FAD cysteine. Residues 388–390 (AHL) carry the Microbody targeting signal motif.

The protein belongs to the MSOX/MTOX family. FAD is required as a cofactor. Expressed in the liver and kidney.

It is found in the peroxisome. It carries out the reaction sarcosine + O2 + H2O = formaldehyde + glycine + H2O2. It catalyses the reaction L-pipecolate + O2 = L-1-piperideine-6-carboxylate + H2O2 + H(+). Its function is as follows. Metabolizes sarcosine and L-pipecolic acid. This is Peroxisomal sarcosine oxidase (PIPOX) from Homo sapiens (Human).